Reading from the N-terminus, the 299-residue chain is Taste receptor type 2 member 16 (299 aa).

Over 1–5 (MVPTQ) the chain is Extracellular. Residues 6 to 26 (VTIFSIIMYVLESLVIIVQSC) traverse the membrane as a helical segment. The Cytoplasmic portion of the chain corresponds to 27–44 (TTVAVLFREWMHFQRLSP). The helical transmembrane segment at 45-65 (VEIILISLGISHFCLQWTSML) threads the bilayer. At 66-82 (YNFGTYSRPVLLFWKVS) the chain is on the extracellular side. The helical transmembrane segment at 83–103 (VVWEFMNVLTFWLTSLLAVLY) threads the bilayer. Residues 104–125 (CVKVSSFSHPVFLWLRLKILKL) are Cytoplasmic-facing. Residues 126–146 (VLWLLLGALIASCLSIIPSVV) traverse the membrane as a helical segment. The Extracellular portion of the chain corresponds to 147-183 (KYHIQMELLTLDHLPKNSSLILRLQMFEWYFSNPFKM). A glycan (N-linked (GlcNAc...) asparagine) is linked at Asn-163. Residues 184 to 204 (IGFGVPFLVFLISIILLTVSL) traverse the membrane as a helical segment. Over 205–233 (VQHWGQMKHYSSSSSSLRAQCTVLKSLAT) the chain is Cytoplasmic. The helical transmembrane segment at 234–254 (FFIFFTSYFLTIVVSFIGTVF) threads the bilayer. At 255 to 258 (DKKS) the chain is on the extracellular side. The helical transmembrane segment at 259–279 (WFWVCEAVIYGLVCIHFTSLM) threads the bilayer. Residues 280-299 (MSNPTLKKALRLQFWSPESS) lie on the Cytoplasmic side of the membrane.

It belongs to the G-protein coupled receptor T2R family. In terms of assembly, interacts with RTP3 and RTP4. In terms of tissue distribution, expressed in subsets of taste receptor cells of the tongue and palate epithelium and exclusively in gustducin-positive cells. Expressed in the antrum and fundus (part of the stomach), duodenum and in gastric endocrine cells.

The protein localises to the cell membrane. Functionally, gustducin-coupled receptor implicated in the perception of bitter compounds in the oral cavity and the gastrointestinal tract. Signals through PLCB2 and the calcium-regulated cation channel TRPM5. The polypeptide is Taste receptor type 2 member 16 (Tas2r16) (Rattus norvegicus (Rat)).